Consider the following 120-residue polypeptide: Large ribosomal subunit protein uL18 (120 aa).

Belongs to the universal ribosomal protein uL18 family. Part of the 50S ribosomal subunit; part of the 5S rRNA/L5/L18/L25 subcomplex. Contacts the 5S and 23S rRNAs.

In terms of biological role, this is one of the proteins that bind and probably mediate the attachment of the 5S RNA into the large ribosomal subunit, where it forms part of the central protuberance. This Herminiimonas arsenicoxydans protein is Large ribosomal subunit protein uL18.